We begin with the raw amino-acid sequence, 736 residues long: Polyribonucleotide nucleotidyltransferase (736 aa).

Mg(2+)-binding residues include Asp-506 and Asp-512. One can recognise a KH domain in the interval 573-632 (PRLTTIQVPVDAIGLIIGKGGETIRSITEETGAEINIEDDGTVTIACSSVEGTHAALATI). The S1 motif domain maps to 642 to 717 (GTIYLGKVRD…GKTRFALSMR (76 aa)).

The protein belongs to the polyribonucleotide nucleotidyltransferase family. Mg(2+) is required as a cofactor.

It is found in the cytoplasm. It catalyses the reaction RNA(n+1) + phosphate = RNA(n) + a ribonucleoside 5'-diphosphate. In terms of biological role, involved in mRNA degradation. Catalyzes the phosphorolysis of single-stranded polyribonucleotides processively in the 3'- to 5'-direction. In Chlorobium limicola (strain DSM 245 / NBRC 103803 / 6330), this protein is Polyribonucleotide nucleotidyltransferase.